We begin with the raw amino-acid sequence, 99 residues long: DNA-directed RNA polymerase subunit omega (99 aa).

The protein belongs to the RNA polymerase subunit omega family. As to quaternary structure, the RNAP catalytic core consists of 2 alpha, 1 beta, 1 beta' and 1 omega subunit. When a sigma factor is associated with the core the holoenzyme is formed, which can initiate transcription.

It carries out the reaction RNA(n) + a ribonucleoside 5'-triphosphate = RNA(n+1) + diphosphate. In terms of biological role, promotes RNA polymerase assembly. Latches the N- and C-terminal regions of the beta' subunit thereby facilitating its interaction with the beta and alpha subunits. The polypeptide is DNA-directed RNA polymerase subunit omega (Thermus thermophilus (strain ATCC BAA-163 / DSM 7039 / HB27)).